A 106-amino-acid chain; its full sequence is Venom family 8-like peptide Pr8a (106 aa).

The signal sequence occupies residues Met1–Ser17.

Post-translationally, contains 2 disulfide bonds. In terms of tissue distribution, expressed by the venom gland (anterior main gland) (at protein level).

The protein resides in the secreted. In Platymeris rhadamanthus (Red spot assassin bug), this protein is Venom family 8-like peptide Pr8a.